A 446-amino-acid polypeptide reads, in one-letter code: Phosphoglucosamine mutase (446 aa).

Ser-100 functions as the Phosphoserine intermediate in the catalytic mechanism. Residues Ser-100, Asp-241, Asp-243, and Asp-245 each contribute to the Mg(2+) site. At Ser-100 the chain carries Phosphoserine.

The protein belongs to the phosphohexose mutase family. Mg(2+) is required as a cofactor. In terms of processing, activated by phosphorylation.

It carries out the reaction alpha-D-glucosamine 1-phosphate = D-glucosamine 6-phosphate. Functionally, catalyzes the conversion of glucosamine-6-phosphate to glucosamine-1-phosphate. The sequence is that of Phosphoglucosamine mutase from Methylorubrum extorquens (strain CM4 / NCIMB 13688) (Methylobacterium extorquens).